Here is a 173-residue protein sequence, read N- to C-terminus: Lens fiber membrane intrinsic protein (173 aa).

Topologically, residues 1 to 3 (MYS) are cytoplasmic. Residues 4-24 (FMGGGLFCAWVGTILLVVATA) traverse the membrane as a helical segment. Residues 25–66 (TDHWMQYRLSGAFAHQGLWRYCLGTKCYLQTESIAYWNATRA) are Extracellular-facing. C-linked (Man) tryptophan; partial glycans are attached at residues Trp43 and Trp61. A helical transmembrane segment spans residues 67 to 87 (FMILSSLCATSGIIMGIVAFA). Residues 88–98 (QQPTFTRLSRP) lie on the Cytoplasmic side of the membrane. A helical membrane pass occupies residues 99-119 (FSAGIMFFASTFFVLLALAIY). Residues 120-140 (TGVTVSFLGRRFGDWRFSWSY) lie on the Extracellular side of the membrane. A helical transmembrane segment spans residues 141–161 (ILGWVALLMTFFAGIFYMCAY). Topologically, residues 162-173 (RMHECRRLSTPR) are cytoplasmic. At Ser170 the chain carries Phosphoserine. The residue at position 171 (Thr171) is a Phosphothreonine.

It belongs to the PMP-22/EMP/MP20 family. Seems to be associated with itself or another lens membrane component via disulfide bonds. Post-translationally, predominantly monophosphorylated on Ser-170. Only about 15% diphosphorylated on both Ser-170 and Thr-171. In terms of processing, C-glycosylated. Trp-43 is more extensively C-glycosylated than Trp-61. C-glycosylation may be involved in membrane trafficking. In terms of tissue distribution, eye lens specific.

Its subcellular location is the membrane. Functionally, present in the thicker 16-17 nm junctions of mammalian lens fiber cells, where it may contribute to cell junctional organization. Acts as a receptor for calmodulin. May play an important role in both lens development and cataractogenesis. The polypeptide is Lens fiber membrane intrinsic protein (LIM2) (Bos taurus (Bovine)).